The primary structure comprises 405 residues: MASQPPPPPKPWESRRIPGAGPGPGSGPGPTYQSADLGPTLLTRPGQPTLTRVPPPILPRPSQQTGSNNVNTFRPAYSSFSSGYGAYGNSFYGSYSPYSYGYNGLGFNRLRVDDLPPSRFVQQAEESSRGAFQSIESIVHAFASVSMMMDATFSAVYNSFRAVLDVANHFSRLKIHFTKVFSAFALVRTIRYLYRRLQWMMGLRRGSENEDLWAESEGTVACLSAEDQATNSAKSWPIFLFFAVILGGPYLIWKLLSTHNDEVTDNTNWASGEDDHVVARAEYDFVAVSDEEISFRAGDMLNLALKEQQPKVRGWLLASLDGQTTGLIPANYVKILGKRRGRKTIESSTMLKQQQSFTNPTLIKGVTTTNPLDEQEAAFESVFVETNKVSSAPDSTGKNGDKQDL.

Pro residues predominate over residues 1-11 (MASQPPPPPKP). The tract at residues 1 to 71 (MASQPPPPPK…SQQTGSNNVN (71 aa)) is disordered. Over 1–136 (MASQPPPPPK…SSRGAFQSIE (136 aa)) the chain is Peroxisomal matrix. The span at 61–71 (PSQQTGSNNVN) shows a compositional bias: polar residues. The helical transmembrane segment at 137 to 157 (SIVHAFASVSMMMDATFSAVY) threads the bilayer. Positions 147 to 235 (MMMDATFSAV…EDQATNSAKS (89 aa)) are targeting to peroxisomes. The Cytoplasmic portion of the chain corresponds to 158–176 (NSFRAVLDVANHFSRLKIH). A helical membrane pass occupies residues 177-194 (FTKVFSAFALVRTIRYLY). Residues 177-198 (FTKVFSAFALVRTIRYLYRRLQ) are interaction with PEX19. At 195-235 (RRLQWMMGLRRGSENEDLWAESEGTVACLSAEDQATNSAKS) the chain is on the peroxisomal matrix side. Residues 236–256 (WPIFLFFAVILGGPYLIWKLL) traverse the membrane as a helical segment. At 257–405 (STHNDEVTDN…TGKNGDKQDL (149 aa)) the chain is on the cytoplasmic side. In terms of domain architecture, SH3 spans 274 to 338 (DDHVVARAEY…PANYVKILGK (65 aa)). Ser356 is modified (phosphoserine).

It belongs to the peroxin-13 family. Interacts (via SH3 domain) with PEX14 (via SH3-binding motif); forming the PEX13-PEX14 docking complex. Interacts with PEX19.

Its subcellular location is the peroxisome membrane. Functionally, component of the PEX13-PEX14 docking complex, a translocon channel that specifically mediates the import of peroxisomal cargo proteins bound to PEX5 receptor. The PEX13-PEX14 docking complex forms a large import pore which can be opened to a diameter of about 9 nm. Mechanistically, PEX5 receptor along with cargo proteins associates with the PEX14 subunit of the PEX13-PEX14 docking complex in the cytosol, leading to the insertion of the receptor into the organelle membrane with the concomitant translocation of the cargo into the peroxisome matrix. Involved in the import of PTS1- and PTS2-type containing proteins. This Mus musculus (Mouse) protein is Peroxisomal membrane protein PEX13.